Here is a 335-residue protein sequence, read N- to C-terminus: tRNA-splicing endonuclease (335 aa).

Catalysis depends on residues Tyr-269, His-280, and Lys-311.

Belongs to the tRNA-intron endonuclease family. Archaeal long subfamily. In terms of assembly, homodimer.

It carries out the reaction pretRNA = a 3'-half-tRNA molecule with a 5'-OH end + a 5'-half-tRNA molecule with a 2',3'-cyclic phosphate end + an intron with a 2',3'-cyclic phosphate and a 5'-hydroxyl terminus.. Endonuclease that removes tRNA introns. Cleaves pre-tRNA at the 5'- and 3'-splice sites to release the intron. The products are an intron and two tRNA half-molecules bearing 2',3' cyclic phosphate and 5'-OH termini. Recognizes a pseudosymmetric substrate in which 2 bulged loops of 3 bases are separated by a stem of 4 bp. The protein is tRNA-splicing endonuclease of Haloarcula marismortui (strain ATCC 43049 / DSM 3752 / JCM 8966 / VKM B-1809) (Halobacterium marismortui).